The chain runs to 179 residues: Large ribosomal subunit protein uL5 (179 aa).

It belongs to the universal ribosomal protein uL5 family. As to quaternary structure, part of the 50S ribosomal subunit; part of the 5S rRNA/L5/L18/L25 subcomplex. Contacts the 5S rRNA and the P site tRNA. Forms a bridge to the 30S subunit in the 70S ribosome.

In terms of biological role, this is one of the proteins that bind and probably mediate the attachment of the 5S RNA into the large ribosomal subunit, where it forms part of the central protuberance. In the 70S ribosome it contacts protein S13 of the 30S subunit (bridge B1b), connecting the 2 subunits; this bridge is implicated in subunit movement. Contacts the P site tRNA; the 5S rRNA and some of its associated proteins might help stabilize positioning of ribosome-bound tRNAs. The sequence is that of Large ribosomal subunit protein uL5 from Enterobacter sp. (strain 638).